The sequence spans 410 residues: Peptidase T (410 aa).

His79 provides a ligand contact to Zn(2+). Asp81 is a catalytic residue. Asp142 lines the Zn(2+) pocket. Glu176 (proton acceptor) is an active-site residue. Residues Glu177, Asp199, and His381 each coordinate Zn(2+).

This sequence belongs to the peptidase M20B family. Zn(2+) serves as cofactor.

The protein localises to the cytoplasm. The enzyme catalyses Release of the N-terminal residue from a tripeptide.. Cleaves the N-terminal amino acid of tripeptides. The protein is Peptidase T of Listeria monocytogenes serotype 4b (strain F2365).